An 898-amino-acid chain; its full sequence is Filament-like plant protein 7 (898 aa).

Coiled coils occupy residues 23–224 (EVVA…TAEA) and 287–320 (EKIN…LQFS). 3 disordered regions span residues 429 to 482 (DNRP…DIKS), 693 to 723 (PGNQ…KLEE), and 777 to 835 (KSNN…GGNS). Over residues 434-459 (SSPICSSDSISATGPVENESNENSSE) the composition is skewed to low complexity. Residues 460-469 (ATKTSGTVYS) are compositionally biased toward polar residues. Residues 703–764 (VEEEANDKTA…KALTNSKETA (62 aa)) are a coiled coil. The segment covering 808–822 (MKAEDHNTGESKDQK) has biased composition (basic and acidic residues).

Belongs to the FPP family. In terms of assembly, interacts with WPP/MAF proteins.

The chain is Filament-like plant protein 7 (FPP7) from Arabidopsis thaliana (Mouse-ear cress).